The primary structure comprises 476 residues: Eukaryotic translation initiation factor 3 subunit L (476 aa).

Residues 257–452 (DAIRMFSHIL…DLDYALENDL (196 aa)) form the PCI domain.

The protein belongs to the eIF-3 subunit L family. As to quaternary structure, component of the eukaryotic translation initiation factor 3 (eIF-3) complex.

Its subcellular location is the cytoplasm. In terms of biological role, component of the eukaryotic translation initiation factor 3 (eIF-3) complex, which is involved in protein synthesis of a specialized repertoire of mRNAs and, together with other initiation factors, stimulates binding of mRNA and methionyl-tRNAi to the 40S ribosome. The eIF-3 complex specifically targets and initiates translation of a subset of mRNAs involved in cell proliferation. The polypeptide is Eukaryotic translation initiation factor 3 subunit L (Aspergillus clavatus (strain ATCC 1007 / CBS 513.65 / DSM 816 / NCTC 3887 / NRRL 1 / QM 1276 / 107)).